Reading from the N-terminus, the 571-residue chain is UvrABC system protein C (571 aa).

Positions 15-93 constitute a GIY-YIG domain; that stretch reads TSPGVYLWKD…VDRFNPEFNI (79 aa). The UVR domain maps to 184-219; that stretch reads NNYLNELTNKMHTAANNMQFELALFLRDGLTYLKKL.

This sequence belongs to the UvrC family. As to quaternary structure, interacts with UvrB in an incision complex.

Its subcellular location is the cytoplasm. The UvrABC repair system catalyzes the recognition and processing of DNA lesions. UvrC both incises the 5' and 3' sides of the lesion. The N-terminal half is responsible for the 3' incision and the C-terminal half is responsible for the 5' incision. This chain is UvrABC system protein C, found in Mycoplasmopsis agalactiae (strain NCTC 10123 / CIP 59.7 / PG2) (Mycoplasma agalactiae).